The primary structure comprises 598 residues: Elongation factor 4 (598 aa).

Residues 2 to 184 (DHIRNFSIIA…AIVKRVPPPR (183 aa)) enclose the tr-type G domain. GTP contacts are provided by residues 14 to 19 (DHGKST) and 131 to 134 (NKID).

This sequence belongs to the TRAFAC class translation factor GTPase superfamily. Classic translation factor GTPase family. LepA subfamily.

The protein localises to the cell inner membrane. It carries out the reaction GTP + H2O = GDP + phosphate + H(+). Functionally, required for accurate and efficient protein synthesis under certain stress conditions. May act as a fidelity factor of the translation reaction, by catalyzing a one-codon backward translocation of tRNAs on improperly translocated ribosomes. Back-translocation proceeds from a post-translocation (POST) complex to a pre-translocation (PRE) complex, thus giving elongation factor G a second chance to translocate the tRNAs correctly. Binds to ribosomes in a GTP-dependent manner. The protein is Elongation factor 4 of Syntrophus aciditrophicus (strain SB).